The following is a 423-amino-acid chain: uncharacterized protein (423 aa).

This sequence belongs to the asfivirus E423R family.

It is found in the virion. This is an uncharacterized protein from Ornithodoros (relapsing fever ticks).